The chain runs to 515 residues: MNAIIAEPGHVSFDDLARVYAGAAIALGPAYWPRVEAAAAIVAKAAQGAEPVYGINTGFGKLASKRIPPDQTALLQRNLILSHCCGVGPATPEPIVRLMIALKIISLGRGASGVRRQIVDQLQAMLAQGVCPFVPQQGSVGASGDLAPLAHMTAVMIGEGQAFVEGRLVPGREALAHVGLDPVTLGPKEGLALINGTQFSTAYALAGLFRARDLLNAALVTGALSVDAAMASTAPFRPEIQALRGHPGQIAAGRVLTELVDGSAIRLSHLEGDERVQDPYCLRCQPQVAGAALDLLTQAARTLVNEANAVTDNPLVLVETGEIISGGNFHAEPVAFAADQIALALSELGAISERRIATLVDPALNFGLPPFLTPQPGLNSGFMIAEVTAAALFAENKQRALPCSIDSTPTSANQEDHVSMAAHAARRLHDMADNLAHIIGIELLVAAQGIELRVPHGTSAALSAVIGALRSHVPALESDRYMADDLAKAAALVAGGALARAANVALGRDSFPRLG.

The segment at residues 142 to 144 (ASG) is a cross-link (5-imidazolinone (Ala-Gly)). 2,3-didehydroalanine (Ser) is present on Ser143.

Belongs to the PAL/histidase family. Contains an active site 4-methylidene-imidazol-5-one (MIO), which is formed autocatalytically by cyclization and dehydration of residues Ala-Ser-Gly.

The protein localises to the cytoplasm. It catalyses the reaction L-histidine = trans-urocanate + NH4(+). The protein operates within amino-acid degradation; L-histidine degradation into L-glutamate; N-formimidoyl-L-glutamate from L-histidine: step 1/3. The sequence is that of Histidine ammonia-lyase from Bradyrhizobium sp. (strain ORS 278).